Consider the following 428-residue polypeptide: Serine hydroxymethyltransferase (428 aa).

Residues Leu117 and 121–123 (GHL) contribute to the (6S)-5,6,7,8-tetrahydrofolate site. Lys226 carries the post-translational modification N6-(pyridoxal phosphate)lysine.

It belongs to the SHMT family. As to quaternary structure, homodimer. Pyridoxal 5'-phosphate serves as cofactor.

It is found in the cytoplasm. The catalysed reaction is (6R)-5,10-methylene-5,6,7,8-tetrahydrofolate + glycine + H2O = (6S)-5,6,7,8-tetrahydrofolate + L-serine. Its pathway is one-carbon metabolism; tetrahydrofolate interconversion. It functions in the pathway amino-acid biosynthesis; glycine biosynthesis; glycine from L-serine: step 1/1. Functionally, catalyzes the reversible interconversion of serine and glycine with tetrahydrofolate (THF) serving as the one-carbon carrier. This reaction serves as the major source of one-carbon groups required for the biosynthesis of purines, thymidylate, methionine, and other important biomolecules. Also exhibits THF-independent aldolase activity toward beta-hydroxyamino acids, producing glycine and aldehydes, via a retro-aldol mechanism. In Aquifex aeolicus (strain VF5), this protein is Serine hydroxymethyltransferase.